A 206-amino-acid polypeptide reads, in one-letter code: Putative NAD(P)H nitroreductase MhqN (206 aa).

FMN is bound by residues 11–13 (RRS), 68–70 (QYK), 157–158 (IG), Arg193, and Arg196.

Belongs to the nitroreductase family. Homodimer. FMN serves as cofactor.

The protein resides in the cytoplasm. In terms of biological role, putative nitroreductase that may contribute to the degradation of aromatic compounds. This Bacillus subtilis (strain 168) protein is Putative NAD(P)H nitroreductase MhqN (mhqN).